Reading from the N-terminus, the 510-residue chain is Global transcription regulator sge1 (510 aa).

3 disordered regions span residues Pro94–Asn152, His393–Ser438, and Leu469–Leu510. A compositionally biased stretch (low complexity) spans Asn123–Ser143. 2 stretches are compositionally biased toward polar residues: residues Gly471–Phe480 and Pro501–Leu510.

Belongs to the MIT1/WOR1 family.

The protein resides in the nucleus. In terms of biological role, global transcriptional regulator of pathogenicity. Differentially regulates expression of effector genes. Also required for radial growth and production of asexual conidiospores, and plays a role in mycelium pigmentation. Not required for induction of Ave1, the effector that activates resistance mediated by the Ve1 immune receptor in tomato. The chain is Global transcription regulator sge1 from Verticillium dahliae (strain VdLs.17 / ATCC MYA-4575 / FGSC 10137) (Verticillium wilt).